The following is a 121-amino-acid chain: Small ribosomal subunit protein uS13 (121 aa).

The disordered stretch occupies residues 99-121; that stretch reads RGQRTRTNSRTRKGPRRKIMKKK. Over residues 101–121 the composition is skewed to basic residues; sequence QRTRTNSRTRKGPRRKIMKKK.

It belongs to the universal ribosomal protein uS13 family. As to quaternary structure, part of the 30S ribosomal subunit. Forms a loose heterodimer with protein S19. Forms two bridges to the 50S subunit in the 70S ribosome.

Functionally, located at the top of the head of the 30S subunit, it contacts several helices of the 16S rRNA. In the 70S ribosome it contacts the 23S rRNA (bridge B1a) and protein L5 of the 50S subunit (bridge B1b), connecting the 2 subunits; these bridges are implicated in subunit movement. Contacts the tRNAs in the A and P-sites. The polypeptide is Small ribosomal subunit protein uS13 (Thermodesulfovibrio yellowstonii (strain ATCC 51303 / DSM 11347 / YP87)).